Here is a 288-residue protein sequence, read N- to C-terminus: ATP phosphoribosyltransferase (288 aa).

It belongs to the ATP phosphoribosyltransferase family. Long subfamily. Requires Mg(2+) as cofactor.

The protein localises to the cytoplasm. The enzyme catalyses 1-(5-phospho-beta-D-ribosyl)-ATP + diphosphate = 5-phospho-alpha-D-ribose 1-diphosphate + ATP. It functions in the pathway amino-acid biosynthesis; L-histidine biosynthesis; L-histidine from 5-phospho-alpha-D-ribose 1-diphosphate: step 1/9. With respect to regulation, feedback inhibited by histidine. Functionally, catalyzes the condensation of ATP and 5-phosphoribose 1-diphosphate to form N'-(5'-phosphoribosyl)-ATP (PR-ATP). Has a crucial role in the pathway because the rate of histidine biosynthesis seems to be controlled primarily by regulation of HisG enzymatic activity. The polypeptide is ATP phosphoribosyltransferase (hisG) (Methanocaldococcus jannaschii (strain ATCC 43067 / DSM 2661 / JAL-1 / JCM 10045 / NBRC 100440) (Methanococcus jannaschii)).